A 448-amino-acid chain; its full sequence is tRNA(Ile)-lysidine synthase (448 aa).

ATP is bound at residue 28-33 (STGVDS).

It belongs to the tRNA(Ile)-lysidine synthase family.

Its subcellular location is the cytoplasm. It carries out the reaction cytidine(34) in tRNA(Ile2) + L-lysine + ATP = lysidine(34) in tRNA(Ile2) + AMP + diphosphate + H(+). Functionally, ligates lysine onto the cytidine present at position 34 of the AUA codon-specific tRNA(Ile) that contains the anticodon CAU, in an ATP-dependent manner. Cytidine is converted to lysidine, thus changing the amino acid specificity of the tRNA from methionine to isoleucine. This is tRNA(Ile)-lysidine synthase from Lactiplantibacillus plantarum (strain ATCC BAA-793 / NCIMB 8826 / WCFS1) (Lactobacillus plantarum).